A 430-amino-acid polypeptide reads, in one-letter code: 3-phosphoshikimate 1-carboxyvinyltransferase (430 aa).

Positions 20, 21, and 25 each coordinate 3-phosphoshikimate. K20 contributes to the phosphoenolpyruvate binding site. The phosphoenolpyruvate site is built by G90 and R118. 3-phosphoshikimate-binding residues include S163, S164, Q165, S191, D311, and K338. Position 165 (Q165) interacts with phosphoenolpyruvate. The Proton acceptor role is filled by D311. Residues R342 and R383 each contribute to the phosphoenolpyruvate site.

This sequence belongs to the EPSP synthase family. As to quaternary structure, monomer.

Its subcellular location is the cytoplasm. It carries out the reaction 3-phosphoshikimate + phosphoenolpyruvate = 5-O-(1-carboxyvinyl)-3-phosphoshikimate + phosphate. The protein operates within metabolic intermediate biosynthesis; chorismate biosynthesis. Catalyzes the transfer of the enolpyruvyl moiety of phosphoenolpyruvate (PEP) to the 5-hydroxyl of shikimate-3-phosphate (S3P) to produce enolpyruvyl shikimate-3-phosphate and inorganic phosphate. The polypeptide is 3-phosphoshikimate 1-carboxyvinyltransferase (Methanosarcina mazei (strain ATCC BAA-159 / DSM 3647 / Goe1 / Go1 / JCM 11833 / OCM 88) (Methanosarcina frisia)).